Reading from the N-terminus, the 462-residue chain is MHKRTYLNACLVLALAAGASQALAAPGASEMAGDVAVLQASPASTGHARFANPNAAISAAGIHFAAPPARRVARAAPLAPKPGTPLQVGVGLKTATPEIDLTTLEWIDTPDGRHTARFPISAAGAASLRAAIRLETHSGSLPDDVLLHFAGAGKEIFEASGKDLSVNRPYWSPVIEGDTLTVELVLPANLQPGDLRLSVPQVSYFADSLYKAGYRDGFGASGSCEVDAVCATQSGTRAYDNATAAVAKMVFTSSADGGSYICTGTLLNNGNSPKRQLFWSAAHCIEDQATAATLQTIWFYNTTQCYGDASTINQSVTVLTGGANILHRDAKRDTLLLELKRTPPAGVFYQGWSATPIANGSLGHDIHHPRGDAKKYSQGNVSAVGVTYDGHTALTRVDWPSAVVEGGSSGSGLLTVAGDGSYQLRGGLYGGPSYCGAPTSQRNDYFSDFSGVYSQISRYFAP.

A signal peptide spans 1–24; the sequence is MHKRTYLNACLVLALAAGASQALA. A propeptide spanning residues 25 to 211 is cleaved from the precursor; sequence APGASEMAGD…VSYFADSLYK (187 aa). 3 cysteine pairs are disulfide-bonded: Cys-224/Cys-435, Cys-230/Cys-305, and Cys-262/Cys-284. Active-site charge relay system residues include His-283, Asp-333, and Ser-409.

It belongs to the peptidase S1 family. In terms of processing, experiments performed in E.coli. Processing of pro-endopeptidase to mature endopeptidase is probably autocatalytic, as mutations in the probable active site residues prevent processing, and purified inactive pro-endopeptidase disappears in the presence of active endopeptidase.

The protein resides in the secreted. The catalysed reaction is Preferential cleavage: Lys-|-Xaa, including Lys-|-Pro.. In terms of biological role, lysine-specific endoprotease. Involved in corneal virulence. The polypeptide is Lysyl endopeptidase (prpL) (Pseudomonas aeruginosa (strain ATCC 15692 / DSM 22644 / CIP 104116 / JCM 14847 / LMG 12228 / 1C / PRS 101 / PAO1)).